We begin with the raw amino-acid sequence, 333 residues long: Ornithine carbamoyltransferase (333 aa).

Carbamoyl phosphate-binding positions include serine 56–threonine 59, arginine 107, and histidine 134–glutamine 137. L-ornithine contacts are provided by residues asparagine 167, aspartate 231, and serine 235–methionine 236. Carbamoyl phosphate-binding positions include cysteine 273 to leucine 274 and arginine 318.

The protein belongs to the aspartate/ornithine carbamoyltransferase superfamily. OTCase family.

The protein resides in the cytoplasm. It carries out the reaction carbamoyl phosphate + L-ornithine = L-citrulline + phosphate + H(+). It functions in the pathway amino-acid degradation; L-arginine degradation via ADI pathway; carbamoyl phosphate from L-arginine: step 2/2. Reversibly catalyzes the transfer of the carbamoyl group from carbamoyl phosphate (CP) to the N(epsilon) atom of ornithine (ORN) to produce L-citrulline. The polypeptide is Ornithine carbamoyltransferase (Clostridium botulinum (strain Langeland / NCTC 10281 / Type F)).